The chain runs to 401 residues: Ribosomal RNA large subunit methyltransferase G (401 aa).

Belongs to the methyltransferase superfamily. RlmG family.

The protein resides in the cytoplasm. It carries out the reaction guanosine(1835) in 23S rRNA + S-adenosyl-L-methionine = N(2)-methylguanosine(1835) in 23S rRNA + S-adenosyl-L-homocysteine + H(+). Its function is as follows. Specifically methylates the guanine in position 1835 (m2G1835) of 23S rRNA. The protein is Ribosomal RNA large subunit methyltransferase G of Shewanella loihica (strain ATCC BAA-1088 / PV-4).